The chain runs to 287 residues: Ciliary microtubule inner protein 6 (287 aa).

Composition is skewed to basic and acidic residues over residues 1 to 15 (MEEK…KIED) and 25 to 34 (EEIKHEEKPG). The tract at residues 1 to 42 (MEEKEDKHQQHKIEDAAITYVSENEEIKHEEKPGKSIHHSKS) is disordered. A mn 1 region spans residues 128–160 (GIVPLASPGTSAELQNNFIEYISFIHQYDARKT). Residues 179 to 287 (KPGSRPTVPK…PLNPPIKKSE (109 aa)) form a disordered region. Basic and acidic residues-rich tracts occupy residues 203-212 (EQSKKTEKGN) and 232-245 (LEPK…DVRQ). The tract at residues 213–246 (SAESRMISPGLCQQNSQELLEPKTHLSETDVRQA) is mn 2.

The protein resides in the cell projection. It localises to the cilium. This Homo sapiens (Human) protein is Ciliary microtubule inner protein 6.